The primary structure comprises 83 residues: Toxin TdNa3 (83 aa).

The N-terminal stretch at 1-20 (MKGMIMLISCLMLIDVVVES) is a signal peptide. The LCN-type CS-alpha/beta domain occupies 21–82 (KNGYIIEPKG…IFDYYNNKCG (62 aa)). Cystine bridges form between Cys31–Cys81, Cys35–Cys57, Cys43–Cys62, and Cys47–Cys64. Cysteine amide is present on Cys81.

This sequence belongs to the long (4 C-C) scorpion toxin superfamily. Sodium channel inhibitor family. Beta subfamily. Expressed by the venom gland.

Its subcellular location is the secreted. Functionally, inhibits the sodium currents (Nav) in an apparent irreversible manner. Produces small depolarization and induces repetitive firing in squid axons. Is specific for arthropods (crickets, triatomides, crabs and squids), but is non-toxic to mice. This Tityus discrepans (Venezuelan scorpion) protein is Toxin TdNa3.